The following is a 260-amino-acid chain: 3'-5' ssDNA/RNA exonuclease TatD (260 aa).

3 residues coordinate a divalent metal cation: Glu92, His128, and His153.

It belongs to the metallo-dependent hydrolases superfamily. TatD-type hydrolase family. TatD subfamily. As to quaternary structure, monomer. It depends on Mg(2+) as a cofactor.

Its subcellular location is the cytoplasm. In terms of biological role, 3'-5' exonuclease that prefers single-stranded DNA and RNA. May play a role in the H(2)O(2)-induced DNA damage repair. This Pectobacterium carotovorum subsp. carotovorum (strain PC1) protein is 3'-5' ssDNA/RNA exonuclease TatD.